The chain runs to 328 residues: Formimidoylglutamase (328 aa).

Mn(2+) is bound by residues His133, Asp159, His161, Asp163, Asp253, and Asp255.

The protein belongs to the arginase family. The cofactor is Mn(2+).

It catalyses the reaction N-formimidoyl-L-glutamate + H2O = formamide + L-glutamate. It participates in amino-acid degradation; L-histidine degradation into L-glutamate; L-glutamate from N-formimidoyl-L-glutamate (hydrolase route): step 1/1. Its function is as follows. Catalyzes the conversion of N-formimidoyl-L-glutamate to L-glutamate and formamide. The polypeptide is Formimidoylglutamase (Streptococcus pyogenes serotype M18 (strain MGAS8232)).